Here is a 371-residue protein sequence, read N- to C-terminus: Phosphate acyltransferase (371 aa).

This sequence belongs to the PlsX family. As to quaternary structure, homodimer. Probably interacts with PlsY.

It is found in the cytoplasm. It carries out the reaction a fatty acyl-[ACP] + phosphate = an acyl phosphate + holo-[ACP]. It participates in lipid metabolism; phospholipid metabolism. Catalyzes the reversible formation of acyl-phosphate (acyl-PO(4)) from acyl-[acyl-carrier-protein] (acyl-ACP). This enzyme utilizes acyl-ACP as fatty acyl donor, but not acyl-CoA. This chain is Phosphate acyltransferase, found in Polaromonas sp. (strain JS666 / ATCC BAA-500).